Here is a 613-residue protein sequence, read N- to C-terminus: Serine protease FAM111A (613 aa).

A disordered region spans residues M1–N72. K19 is covalently cross-linked (Glycyl lysine isopeptide (Lys-Gly) (interchain with G-Cter in SUMO2)). S25 carries the phosphoserine modification. Residue K29 forms a Glycyl lysine isopeptide (Lys-Gly) (interchain with G-Cter in SUMO2) linkage. The segment covering V40–R56 has biased composition (basic and acidic residues). Residue K62 forms a Glycyl lysine isopeptide (Lys-Gly) (interchain with G-Cter in SUMO2) linkage. Catalysis depends on charge relay system residues H383, D437, and S543.

This sequence belongs to the FAM111 family. In terms of assembly, interacts (via PIP-box) with PCNA; this interaction is direct. Autocatalytically cleaved; autocatalytic cleavage takes place in trans.

It localises to the nucleus. Its subcellular location is the chromosome. The protein localises to the cytoplasm. Functionally, single-stranded DNA-binding serine protease that mediates the proteolytic cleavage of covalent DNA-protein cross-links (DPCs) during DNA synthesis, thereby playing a key role in maintaining genomic integrity. DPCs are highly toxic DNA lesions that interfere with essential chromatin transactions, such as replication and transcription, and which are induced by reactive agents, such as UV light or formaldehyde. Protects replication fork from stalling by removing DPCs, such as covalently trapped topoisomerase 1 (TOP1) adducts on DNA lesion, or poly(ADP-ribose) polymerase 1 (PARP1)-DNA complexes trapped by PARP inhibitors. Required for PCNA loading on replication sites. Promotes S-phase entry and DNA synthesis. The sequence is that of Serine protease FAM111A from Mus musculus (Mouse).